Reading from the N-terminus, the 397-residue chain is Protein EMSY-LIKE 3 (397 aa).

A disordered region spans residues 1–40; the sequence is MDYRPSDSSGTDDDLPPSHQGRYQRNARPTGNGRPSVLNS. The ENT domain maps to 50 to 137; it reads METQIHLIEQ…PQLVHDAPSP (88 aa). Residues 81 to 107 adopt a coiled-coil conformation; it reads ESLITELRKELRVSDEEHRELLSRVNA. Disordered regions lie at residues 122–221 and 284–330; these read SLQS…SYDP and DPGI…TQNG. Residues 164-174 show a composition bias toward polar residues; it reads LHPSMQPSSSA. A Nuclear localization signal motif is present at residues 175-182; that stretch reads LRRGGPPP. The stretch at 363–389 forms a coiled coil; the sequence is AEVEKAKRVLRDHELALMDAIAKLEEI. Ser390 is subject to Phosphoserine.

The protein resides in the nucleus. Probably involved in the regulation of chromatin states. Contributes to basal immunity. This chain is Protein EMSY-LIKE 3, found in Arabidopsis thaliana (Mouse-ear cress).